A 398-amino-acid chain; its full sequence is S-adenosylmethionine synthase (398 aa).

Histidine 16 lines the ATP pocket. Residue aspartate 18 participates in Mg(2+) binding. Position 51 (glutamate 51) interacts with K(+). L-methionine is bound by residues glutamate 64 and glutamine 108. The interval 108 to 118 is flexible loop; sequence QSADIAQGVDA. ATP contacts are provided by residues 176 to 178, 242 to 243, aspartate 251, 257 to 258, alanine 274, and lysine 278; these read DSK, KF, and RK. L-methionine is bound at residue aspartate 251. L-methionine is bound at residue lysine 282.

This sequence belongs to the AdoMet synthase family. As to quaternary structure, homotetramer; dimer of dimers. Mg(2+) is required as a cofactor. It depends on K(+) as a cofactor.

It localises to the cytoplasm. It catalyses the reaction L-methionine + ATP + H2O = S-adenosyl-L-methionine + phosphate + diphosphate. Its pathway is amino-acid biosynthesis; S-adenosyl-L-methionine biosynthesis; S-adenosyl-L-methionine from L-methionine: step 1/1. Its function is as follows. Catalyzes the formation of S-adenosylmethionine (AdoMet) from methionine and ATP. The overall synthetic reaction is composed of two sequential steps, AdoMet formation and the subsequent tripolyphosphate hydrolysis which occurs prior to release of AdoMet from the enzyme. This chain is S-adenosylmethionine synthase, found in Rhodopseudomonas palustris (strain BisB5).